A 99-amino-acid polypeptide reads, in one-letter code: MAKSGIAAGVNKGRKTTAKEVAPKISYRKGASSQRTVFVRSIVKEVAGLAPYERRLIELIRNAGEKRAKKLAKKRLGTHKRALRKVEEMTQVIAESRRH.

It belongs to the eukaryotic ribosomal protein eL36 family. In terms of assembly, component of the large ribosomal subunit. Mature ribosomes consist of a small (40S) and a large (60S) subunit. The 40S subunit contains about 32 different proteins and 1 molecule of RNA (18S). The 60S subunit contains 45 different proteins and 3 molecules of RNA (25S, 5.8S and 5S).

The protein resides in the cytoplasm. Functionally, component of the ribosome, a large ribonucleoprotein complex responsible for the synthesis of proteins in the cell. The small ribosomal subunit (SSU) binds messenger RNAs (mRNAs) and translates the encoded message by selecting cognate aminoacyl-transfer RNA (tRNA) molecules. The large subunit (LSU) contains the ribosomal catalytic site termed the peptidyl transferase center (PTC), which catalyzes the formation of peptide bonds, thereby polymerizing the amino acids delivered by tRNAs into a polypeptide chain. The nascent polypeptides leave the ribosome through a tunnel in the LSU and interact with protein factors that function in enzymatic processing, targeting, and the membrane insertion of nascent chains at the exit of the ribosomal tunnel. This Candida albicans (strain SC5314 / ATCC MYA-2876) (Yeast) protein is Large ribosomal subunit protein eL36.